Reading from the N-terminus, the 345-residue chain is Tropomodulin-4 (345 aa).

Residues 42 to 63 are disordered; that stretch reads NMLLPAGLRQRDQTKKSPTGPL.

Belongs to the tropomodulin family. As to quaternary structure, binds to the N-terminus of tropomyosin and to actin.

The protein resides in the cytoplasm. It localises to the cytoskeleton. Functionally, blocks the elongation and depolymerization of the actin filaments at the pointed end. The Tmod/TM complex contributes to the formation of the short actin protofilament, which in turn defines the geometry of the membrane skeleton. This Bos taurus (Bovine) protein is Tropomodulin-4 (TMOD4).